Consider the following 378-residue polypeptide: 3,6-diketocamphane 1,6-monooxygenase (378 aa).

FMN-binding positions include H10, S44, M76, and 201–209; that span reads TGFSYNSPS.

Belongs to the bacterial luciferase oxidoreductase family. Homodimer. Likely forms a loose transient complex with a P.putida flavin reductase that provides the required FMNH(2) to the enzyme.

It carries out the reaction (1S,4S)-bornane-2,5-dione + FMNH2 + O2 = (1S,4S)-5-oxo-1,2-campholide + FMN + H2O + H(+). Functionally, involved in the degradation and assimilation of (-)-camphor, which allows P.putida strain NCIMB 10007 to grow on this enantiomer of camphor as the sole carbon source. Catalyzes the FMNH(2)-dependent lactonization of 3,6-diketocamphane via a Baeyer-Villiger oxidation to produce the unstable lactone 5-oxo-1,2-campholide with (S,S) configuration, that presumably undergoes spontaneous hydrolysis to form 2-oxo-Delta(3)-4,5,5-trimethylcyclopentenylacetate. Is also able to convert (-)-camphor to the corresponding lactone in vitro. Shows no conversion of (+)-camphor, (+)-fenchone, (-)-fenchone, and (+)-nopinone. Acts on other bicyclic ketones but very poorly on a few 2- and 4-substituted monocyclic ketones. This Pseudomonas putida (Arthrobacter siderocapsulatus) protein is 3,6-diketocamphane 1,6-monooxygenase.